The chain runs to 446 residues: MTEQKKRLEKLSGVKGMNDILPQDAGLWEFFETTVKSMLRSYGYQNIRTPIVEHTQLFTRGIGEVTDIVEKEMYSFTDALNGENLTMRPENTAAVVRASIEHNMLYDGPKRLWYIGPMFRHERPQRGRYRQFHQVGVEALGFAGPDTDAEIILMCQRLWDDLGLTGIKLEINSLGLAEERAKHRVELIAYLEKHMDVLDEDAKRRLYTNPLRVLDTKNPALQAVAQNAPKLIDFLGDESRAHFEGLQRILKANNIPFTINPRLVRGLDYYNLTVFEWVTDKLGAQGTVAAGGRYDPLIEQLGGKPTAACGWAMGIERILELLKEENLVPENEGCDVYVAHQGEAARDQAFIVAERLRDTGLDVILHCSPDGQASSFKSQMKRADASGAAFAVILGEDEIANGTAGVKALRDSSQSNGKSEQQTVPLEDLTEYLINAMVASTEDGDD.

Belongs to the class-II aminoacyl-tRNA synthetase family. As to quaternary structure, homodimer.

Its subcellular location is the cytoplasm. The enzyme catalyses tRNA(His) + L-histidine + ATP = L-histidyl-tRNA(His) + AMP + diphosphate + H(+). This is Histidine--tRNA ligase from Paraburkholderia phymatum (strain DSM 17167 / CIP 108236 / LMG 21445 / STM815) (Burkholderia phymatum).